The following is a 202-amino-acid chain: Solute carrier family 66 member 3 (202 aa).

The first 19 residues, 1-19, serve as a signal peptide directing secretion; that stretch reads MEAALLGLCNWSTLGVCAA. A run of 4 helical transmembrane segments spans residues 33 to 53, 64 to 84, 97 to 117, and 171 to 191; these read SARGLSLPSLLLELAGFLVFL, LTYLEYPILIAQDVILLLCIF, IAVLVSSWFILALQKWIIDLA, and FTILLRFVIMLALNIWVTVTV.

The protein localises to the membrane. The polypeptide is Solute carrier family 66 member 3 (Homo sapiens (Human)).